A 274-amino-acid chain; its full sequence is Light-independent protochlorophyllide reductase iron-sulfur ATP-binding protein (274 aa).

ATP-binding positions include Gly-12–Thr-17 and Lys-41. Ser-16 is a Mg(2+) binding site. [4Fe-4S] cluster-binding residues include Cys-97 and Cys-131.

This sequence belongs to the NifH/BchL/ChlL family. Homodimer. Protochlorophyllide reductase is composed of three subunits; BchL, BchN and BchB. [4Fe-4S] cluster is required as a cofactor.

The enzyme catalyses chlorophyllide a + oxidized 2[4Fe-4S]-[ferredoxin] + 2 ADP + 2 phosphate = protochlorophyllide a + reduced 2[4Fe-4S]-[ferredoxin] + 2 ATP + 2 H2O. It functions in the pathway porphyrin-containing compound metabolism; bacteriochlorophyll biosynthesis (light-independent). In terms of biological role, component of the dark-operative protochlorophyllide reductase (DPOR) that uses Mg-ATP and reduced ferredoxin to reduce ring D of protochlorophyllide (Pchlide) to form chlorophyllide a (Chlide). This reaction is light-independent. The L component serves as a unique electron donor to the NB-component of the complex, and binds Mg-ATP. The sequence is that of Light-independent protochlorophyllide reductase iron-sulfur ATP-binding protein from Chloroherpeton thalassium (strain ATCC 35110 / GB-78).